A 176-amino-acid polypeptide reads, in one-letter code: Large ribosomal subunit protein uL10 (176 aa).

The protein belongs to the universal ribosomal protein uL10 family. As to quaternary structure, part of the ribosomal stalk of the 50S ribosomal subunit. The N-terminus interacts with L11 and the large rRNA to form the base of the stalk. The C-terminus forms an elongated spine to which L12 dimers bind in a sequential fashion forming a multimeric L10(L12)X complex.

Forms part of the ribosomal stalk, playing a central role in the interaction of the ribosome with GTP-bound translation factors. The sequence is that of Large ribosomal subunit protein uL10 from Thioalkalivibrio sulfidiphilus (strain HL-EbGR7).